A 210-amino-acid polypeptide reads, in one-letter code: Chaperone protein TorD (210 aa).

Belongs to the TorD/DmsD family. TorD subfamily.

It localises to the cytoplasm. In terms of biological role, involved in the biogenesis of TorA. Acts on TorA before the insertion of the molybdenum cofactor and, as a result, probably favors a conformation of the apoenzyme that is competent for acquiring the cofactor. In Salmonella paratyphi B (strain ATCC BAA-1250 / SPB7), this protein is Chaperone protein TorD.